The primary structure comprises 648 residues: Shugoshin (648 aa).

2 coiled-coil regions span residues leucine 95–valine 122 and aspartate 208–alanine 273. Disordered stretches follow at residues lysine 188–arginine 239, glutamate 262–alanine 334, valine 367–arginine 443, threonine 483–aspartate 518, and histidine 628–threonine 648. Basic and acidic residues-rich tracts occupy residues valine 200 to alanine 217 and glutamate 262 to alanine 273. Over residues alanine 306–glutamate 315 the composition is skewed to polar residues. Basic and acidic residues-rich tracts occupy residues isoleucine 424–arginine 440 and glutamine 490–aspartate 509.

Belongs to the shugoshin family.

It localises to the nucleus. Its subcellular location is the chromosome. The protein localises to the centromere. Plays a central role in chromosome cohesion during cell division by preventing premature dissociation of cohesin complex from centromeres after prophase, when most of cohesin complex dissociates from chromosomes arms. May act by protecting RAD21 and or REC8 from cleavage by ESP1/separase. This Eremothecium gossypii (strain ATCC 10895 / CBS 109.51 / FGSC 9923 / NRRL Y-1056) (Yeast) protein is Shugoshin (SGO1).